Consider the following 356-residue polypeptide: Probable cinnamyl alcohol dehydrogenase (356 aa).

Cysteine 47 contributes to the Zn(2+) binding site. Serine 49 lines the NADP(+) pocket. Residues histidine 69, glutamate 70, cysteine 100, cysteine 103, cysteine 106, cysteine 114, and cysteine 163 each coordinate Zn(2+). NADP(+) is bound by residues threonine 167, 188 to 193 (GLGGVG), 211 to 216 (SSSDKK), threonine 251, glycine 275, and 298 to 300 (SFI).

The protein belongs to the zinc-containing alcohol dehydrogenase family. As to quaternary structure, homodimer. Zn(2+) is required as a cofactor.

The enzyme catalyses (E)-cinnamyl alcohol + NADP(+) = (E)-cinnamaldehyde + NADPH + H(+). The catalysed reaction is (E)-coniferol + NADP(+) = (E)-coniferaldehyde + NADPH + H(+). It carries out the reaction (E)-sinapyl alcohol + NADP(+) = (E)-sinapaldehyde + NADPH + H(+). It catalyses the reaction (E)-4-coumaroyl alcohol + NADP(+) = (E)-4-coumaraldehyde + NADPH + H(+). The enzyme catalyses (E)-caffeyl alcohol + NADP(+) = (E)-caffeyl aldehyde + NADPH + H(+). It participates in aromatic compound metabolism; phenylpropanoid biosynthesis. Functionally, involved in lignin biosynthesis. Catalyzes the final step specific for the production of lignin monomers. Catalyzes the NADPH-dependent reduction of coniferaldehyde, 5-hydroxyconiferaldehyde, sinapaldehyde, 4-coumaraldehyde and caffeyl aldehyde to their respective alcohols. This chain is Probable cinnamyl alcohol dehydrogenase (CAD), found in Eucalyptus globulus (Tasmanian blue gum).